A 417-amino-acid chain; its full sequence is Secernin-3 (417 aa).

Positions 1-5 are excised as a propeptide; it reads MYPRS. Cysteine 6 is a catalytic residue. Cysteine 6 is subject to Glyoxylic acid (Cys); alternate. Cysteine 6 is subject to Pyruvic acid (Cys); alternate.

Belongs to the peptidase C69 family. Secernin subfamily.

Plays a role in thermal nociception. This is Secernin-3 (scrn3) from Danio rerio (Zebrafish).